Reading from the N-terminus, the 113-residue chain is Large ribosomal subunit protein bL19 (113 aa).

The protein belongs to the bacterial ribosomal protein bL19 family.

Functionally, this protein is located at the 30S-50S ribosomal subunit interface and may play a role in the structure and function of the aminoacyl-tRNA binding site. The protein is Large ribosomal subunit protein bL19 of Corynebacterium urealyticum (strain ATCC 43042 / DSM 7109).